The following is a 107-amino-acid chain: UPF0060 membrane protein ZMO1566 (107 aa).

The next 4 membrane-spanning stretches (helical) occupy residues 4-24 (LLYI…WAWI), 29-49 (SPLW…LLTF), 55-75 (AGKA…LWSW), and 84-104 (HWDL…LWMP).

This sequence belongs to the UPF0060 family.

The protein resides in the cell inner membrane. The polypeptide is UPF0060 membrane protein ZMO1566 (Zymomonas mobilis subsp. mobilis (strain ATCC 31821 / ZM4 / CP4)).